The chain runs to 657 residues: MPRYTVHVRGEWLAVPCQDAQLTVGWLGREAVRRYIKNKPDNGGFASVDDARFLVRRCKGLGLLDNEDPLDVALEDNEFVEVVIEGDAMSPDFIPSQPEGVYLYSKYREPEKYIALDGDSLTTEDLVSLGKGHYKIKLTPTAEKRVQKSREVIDRIVEEKTVVYGITTGFGKFARTVIPVSKLEELQFNLVRSHSSGVGKPLSPERCRMLLALRINVLAKGYSGISLGTLKQVIEVFNASCLPYVPEKGTVGASGDLAPLSHLALGLIGEGKMWSPKSGWADAKYVLAAHGLKPIVLKPKEGLALINGTQMITSLGCEAVERASAIARQADIVAALTLEVLKGTTKAFDTDIHAVRPHRGQVEVAFRFRSLLDSDHHPSEIAESHRFCDRVQDAYTLRCCPQVHGVVNDTIAFVKNIITTEINSATDNPMVFASRGETISGGNFHGEYPAKALDYLAIGVHELASISERRIERLCNPSLSELPAFLVAEGGLNSGFMIAHCTAAALVSENKALCHPSSVDSLSTSAATEDHVSMGGWAARKALRVIEHVEQVLAIELLAACQGIEFLRPLKTTTPLEKVYDLVRSVVRPWIKDRFMAPDIEAAHRLLVEQKVWEVAAPYIEKYRMEHIPESRPVSPTAFSLEFLHKKSTKIPESEDL.

A cross-link (5-imidazolinone (Ala-Gly)) is located at residues 253 to 255 (ASG). Position 254 is a 2,3-didehydroalanine (Ser) (S254). T396 bears the Phosphothreonine mark. Position 635 is a phosphoserine (S635). T637 bears the Phosphothreonine mark. S648 carries the phosphoserine modification.

This sequence belongs to the PAL/histidase family. Contains an active site 4-methylidene-imidazol-5-one (MIO), which is formed autocatalytically by cyclization and dehydration of residues Ala-Ser-Gly.

The catalysed reaction is L-histidine = trans-urocanate + NH4(+). The protein operates within amino-acid degradation; L-histidine degradation into L-glutamate; N-formimidoyl-L-glutamate from L-histidine: step 1/3. The protein is Histidine ammonia-lyase (HAL) of Bos taurus (Bovine).